The sequence spans 682 residues: Methionine--tRNA ligase (682 aa).

Positions 15-25 (PYANGAIHLGH) match the 'HIGH' region motif. 4 residues coordinate Zn(2+): C146, C149, C159, and C162. A 'KMSKS' region motif is present at residues 331–335 (KMSKS). K334 provides a ligand contact to ATP. Residues 580–682 (DFAKLDLRVA…QGVKPGMQVK (103 aa)) form the tRNA-binding domain.

The protein belongs to the class-I aminoacyl-tRNA synthetase family. MetG type 1 subfamily. In terms of assembly, homodimer. Zn(2+) serves as cofactor.

It localises to the cytoplasm. The enzyme catalyses tRNA(Met) + L-methionine + ATP = L-methionyl-tRNA(Met) + AMP + diphosphate. Functionally, is required not only for elongation of protein synthesis but also for the initiation of all mRNA translation through initiator tRNA(fMet) aminoacylation. This Pasteurella multocida (strain Pm70) protein is Methionine--tRNA ligase.